The primary structure comprises 115 residues: Prefoldin subunit beta (115 aa).

Belongs to the prefoldin subunit beta family. Heterohexamer of two alpha and four beta subunits.

The protein resides in the cytoplasm. Molecular chaperone capable of stabilizing a range of proteins. Seems to fulfill an ATP-independent, HSP70-like function in archaeal de novo protein folding. The sequence is that of Prefoldin subunit beta from Methanococcus aeolicus (strain ATCC BAA-1280 / DSM 17508 / OCM 812 / Nankai-3).